The sequence spans 1643 residues: DNA-directed RNA polymerase subunit beta' (1643 aa).

Residues Cys64, Cys66, Cys79, and Cys82 each coordinate Zn(2+). 3 residues coordinate Mg(2+): Asp684, Asp686, and Asp688. Zn(2+) contacts are provided by Cys1046, Cys1239, Cys1246, and Cys1249.

The protein belongs to the RNA polymerase beta' chain family. The RNAP catalytic core consists of 2 alpha, 1 beta, 1 beta' and 1 omega subunit. When a sigma factor is associated with the core the holoenzyme is formed, which can initiate transcription. Mg(2+) is required as a cofactor. The cofactor is Zn(2+).

The enzyme catalyses RNA(n) + a ribonucleoside 5'-triphosphate = RNA(n+1) + diphosphate. Its function is as follows. DNA-dependent RNA polymerase catalyzes the transcription of DNA into RNA using the four ribonucleoside triphosphates as substrates. The polypeptide is DNA-directed RNA polymerase subunit beta' (Petrotoga mobilis (strain DSM 10674 / SJ95)).